We begin with the raw amino-acid sequence, 341 residues long: Phosphate acyltransferase (341 aa).

Belongs to the PlsX family. Homodimer. Probably interacts with PlsY.

It localises to the cytoplasm. The enzyme catalyses a fatty acyl-[ACP] + phosphate = an acyl phosphate + holo-[ACP]. Its pathway is lipid metabolism; phospholipid metabolism. Functionally, catalyzes the reversible formation of acyl-phosphate (acyl-PO(4)) from acyl-[acyl-carrier-protein] (acyl-ACP). This enzyme utilizes acyl-ACP as fatty acyl donor, but not acyl-CoA. The protein is Phosphate acyltransferase of Chlorobaculum parvum (strain DSM 263 / NCIMB 8327) (Chlorobium vibrioforme subsp. thiosulfatophilum).